A 93-amino-acid chain; its full sequence is Large ribosomal subunit protein uL23c (93 aa).

Belongs to the universal ribosomal protein uL23 family. In terms of assembly, part of the 50S ribosomal subunit.

The protein localises to the plastid. It localises to the chloroplast. Its function is as follows. Binds to 23S rRNA. This is Large ribosomal subunit protein uL23c (rpl23) from Adiantum capillus-veneris (Maidenhair fern).